Consider the following 308-residue polypeptide: uncharacterized protein (308 aa).

An N-terminal signal peptide occupies residues 1-18; the sequence is MKIILLFLAALASFTVHA.

This is an uncharacterized protein from Escherichia coli (strain K12).